A 142-amino-acid polypeptide reads, in one-letter code: Hemoglobin subunit epsilon (142 aa).

In terms of domain architecture, Globin spans 3 to 142 (HFTAEEKAAI…KLVSAVAIAL (140 aa)). A phosphoserine mark is found at S14 and S51. H64 and H93 together coordinate heme b.

It belongs to the globin family. In terms of assembly, heterotetramer of two alpha chains and two epsilon chains in early embryonic hemoglobin Gower-2; two zeta chains and two epsilon chains in early embryonic hemoglobin Gower-1. As to expression, red blood cells.

Its function is as follows. The epsilon chain is a beta-type chain of early mammalian embryonic hemoglobin. This Callithrix geoffroyi (Geoffroy's marmoset) protein is Hemoglobin subunit epsilon (HBE1).